We begin with the raw amino-acid sequence, 91 residues long: MATSAAAKDDDSPATRFAVDQLRSIIERIERLEEEKKAISEDIKDVYAESKGNGFDVKALRTIIRLRKQDPNERQEEESILETYMQALGMV.

Belongs to the UPF0335 family.

This Bradyrhizobium sp. (strain BTAi1 / ATCC BAA-1182) protein is UPF0335 protein BBta_6866.